A 1104-amino-acid chain; its full sequence is MSSNNEPAQSRTSYFKLNEFLSNVKHYKNTFKGEIQWCNNLSLNDWKTHYLQITSTGALTHSIDELTADSTNIQPIIKHLQQCRIEIIKDKHSSFKDINANCNFIIQVNTSGKDNKVYLRVKSWSDFKKLLTCLIWWSSMKTNGIFNKFQVSRPLEFKSKKMAKPESLLVYKLNVFGPIVKNIVLPPATNILESPDIINNDDNSVGWFSAMGVLKSNGMLDLLLQSDGSLIYSLNISQLLRSEIRILDSSVLQSENSLFLGELPLLRSQLGLEKFRIENIASAATNSSDISQEIIVEFPLRIDLEDCFIALQSFARSEYLSITGSDKSNDMKISNSFKISILEANFQSINLNDKNNTPWSIFTDITAWGHTWARTSMVSNSSNPFWREEFQFNELLRLTNSYLEIKQLFHDLNNKKRLRLIGKIKITQEIINDTRYNKETRLPIMDVDNKNFQIGTICIKISSNLNFILPSTNFVKLEKLLMNANLSMVSNLIYKSSSSMENDNKLTQTSIIFLDIFQSLSRIEEWFHVLIDKELAKIDGTVSRINQKNLDSKHVFNSLFRGNSILTKSIEQYFFRVGNEYLSKALSAILKEIIESNKSCELDPARVKEKDEVKKRKIIADNYKRLYSWVTKIWKRLYATSNDLPIEIRNVLKIFRQKLEIICIDDTLQIILNGISGLLFLRFFCPVILNPKLFKYVSQNLNETARRNLTLISKVLLNLSTLTQFANKEPWLMKMNNFIDKRHNDLLDYIDKMTQKKLDFNSKILNLSSTISRPKLAIEQTMLDDLPQIPYLLDKNLRETEFVNLIVNFSQEDMTKMEKYNHMDNGGKGELIEEEGLLSGSSLNLSVDKKDLDSPIEVKPEIGELEFEKITENNTEIFGDDLMNLLKSDDVGSRSRDLDNGANSGIKFNSIIPKAEEEKHAMKELEQESCLLYNRINHIRKRLSGYECASSTLFEDKKYSISLSHKIFYEEIKEGKEIVLKLLNKPTNENSSARLQKFFTKGVSSKSNNTVGDSYCKFLTIDVSDENPKSSNKTSVHGTSSENGAKDDYLTLPNSQGKGNLGNRFSPTKLSRIMRKPPNADVPKEQNSRKLTRWFKKKKETGGS.

S2 is modified (N-acetylserine). Positions 316 to 444 (RSEYLSITGS…RYNKETRLPI (129 aa)) constitute a C2 domain. Positions 536–753 (AKIDGTVSRI…NDLLDYIDKM (218 aa)) constitute a Ras-GAP domain. S854 bears the Phosphoserine mark. Positions 1027 to 1104 (NPKSSNKTSV…FKKKKETGGS (78 aa)) are disordered. 2 stretches are compositionally biased toward polar residues: residues 1029–1043 (KSSNKTSVHGTSSEN) and 1052–1069 (LPNSQGKGNLGNRFSPTK). Residues 1090–1104 (KLTRWFKKKKETGGS) show a composition bias toward basic residues.

Its function is as follows. Stimulates the GTPase activity of BUD1/RSR1. Participates in the regulation of bud-site selection. This chain is Inhibitory regulator protein BUD2/CLA2 (BUD2), found in Saccharomyces cerevisiae (strain ATCC 204508 / S288c) (Baker's yeast).